We begin with the raw amino-acid sequence, 1259 residues long: Lysine-specific demethylase 2B (1259 aa).

Residues 147 to 315 (FSHTKLERVV…MQLRVFEIED (169 aa)) enclose the JmjC domain. T208 provides a ligand contact to substrate. Residues H211 and D213 each contribute to the Fe cation site. K228 lines the substrate pocket. H283 lines the Fe cation pocket. A compositionally biased stretch (basic and acidic residues) spans 388–402 (EEKGNLVEKPSKQSG). Disordered regions lie at residues 388–463 (EEKG…ATDM) and 536–562 (KPSK…SANR). Residues 403-413 (DESSTTNSTHS) show a composition bias toward polar residues. A compositionally biased stretch (basic and acidic residues) spans 414 to 423 (NGKDAAEKKQ). Residues 426–437 (TLMQQLKRTLSN) show a composition bias toward polar residues. Residues 536 to 548 (KPSKNRAVGRPKG) are compositionally biased toward basic residues. The segment at 567 to 613 (ARRRRTRCRKCEACLRTECGECHFCKDMKKFGGPGRMKQSCIMRQCI) adopts a CXXC-type zinc-finger fold. Zn(2+)-binding residues include C574, C577, C580, C585, C588, C591, C607, C612, C623, C626, C649, C652, H657, C660, C680, and C683. The PHD-type zinc finger occupies 620–686 (TAVCLVCGEA…CWECPKCNHA (67 aa)). 2 stretches are compositionally biased toward basic and acidic residues: residues 729–763 (KKKV…EDGH) and 771–790 (EKPP…EEKL). The interval 729–958 (KKKVEREETP…PPPSLSPPKC (230 aa)) is disordered. The span at 835–848 (SRSSSPTAGPSTEG) shows a compositional bias: polar residues. Basic residues predominate over residues 854-863 (KKKIRRKRRV). The segment covering 864-877 (SNKELSKELSKELN) has biased composition (basic and acidic residues). A coiled-coil region spans residues 864–891 (SNKELSKELSKELNQEIQKTESSLASEN). Residues 878–889 (QEIQKTESSLAS) show a composition bias toward polar residues. Basic and acidic residues predominate over residues 890–908 (ENHHPIKSEPESDNEESKK). In terms of domain architecture, F-box spans 985 to 1030 (AHVMQREVWMAIFSYLSHRDLCICMRICRTWNRWCCDKRLWTQIDL). 5 LRR repeats span residues 1056–1081 (WTNI…NLSG), 1082–1105 (CSWI…NVQW), 1145–1170 (GLDI…DLSY), 1171–1200 (CNHV…NLSD), and 1201–1225 (CNNV…DLRF).

Belongs to the JHDM1 histone demethylase family. It depends on Fe(2+) as a cofactor.

Its subcellular location is the nucleus. It localises to the nucleolus. The protein resides in the chromosome. The enzyme catalyses N(6),N(6)-dimethyl-L-lysyl(36)-[histone H3] + 2 2-oxoglutarate + 2 O2 = L-lysyl(36)-[histone H3] + 2 formaldehyde + 2 succinate + 2 CO2. Its activity is regulated as follows. Histone demethylase activity is inhibited by fumarate. Functionally, histone demethylase that demethylates 'Lys-4' and 'Lys-36' of histone H3, thereby playing a central role in histone code. Preferentially demethylates trimethylated H3 'Lys-4' and dimethylated H3 'Lys-36' residue while it has weak or no activity for mono- and tri-methylated H3 'Lys-36'. Preferentially binds the transcribed region of ribosomal RNA and represses the transcription of ribosomal RNA genes which inhibits cell growth and proliferation. The chain is Lysine-specific demethylase 2B (kdm2b) from Xenopus laevis (African clawed frog).